A 386-amino-acid polypeptide reads, in one-letter code: Methionine aminopeptidase 1 (386 aa).

A C6H2-type zinc finger spans residues 6–59 (TRECETEGCHSEAKLQCPTCIKLGIQGSYFCSQECFKGSWATHKLLHKKAKEDK). 8 residues coordinate Zn(2+): Cys-9, Cys-14, Cys-22, Cys-25, Cys-36, Cys-40, His-48, and His-52. Residue His-202 coordinates a protein. Asp-219, Asp-230, and His-293 together coordinate Zn(2+). His-300 serves as a coordination point for a protein. Zn(2+)-binding residues include Glu-326 and Glu-357.

The protein belongs to the peptidase M24A family. Methionine aminopeptidase type 1 subfamily. In terms of assembly, associates with the 60S ribosomal subunit of the 80S translational complex. Zn(2+) serves as cofactor. It depends on Co(2+) as a cofactor. The cofactor is Mn(2+). Fe(2+) is required as a cofactor.

It localises to the cytoplasm. The catalysed reaction is Release of N-terminal amino acids, preferentially methionine, from peptides and arylamides.. Functionally, cotranslationally removes the N-terminal methionine from nascent proteins. The N-terminal methionine is often cleaved when the second residue in the primary sequence is small and uncharged (Met-Ala-, Cys, Gly, Pro, Ser, Thr, or Val). This Danio rerio (Zebrafish) protein is Methionine aminopeptidase 1 (metap1).